The chain runs to 383 residues: Serine protease 23 (383 aa).

A signal peptide spans 1-23 (MAGIPGLLILLLVLLCVFMQVSP). N-linked (GlcNAc...) asparagine glycosylation is present at N93. C160 and C176 are joined by a disulfide. Catalysis depends on H175, which acts as the Charge relay system. An N-linked (GlcNAc...) asparagine glycan is attached at N207. Residues D240 and S316 each act as charge relay system in the active site.

Belongs to the peptidase S1 family.

The protein localises to the secreted. The polypeptide is Serine protease 23 (Prss23) (Rattus norvegicus (Rat)).